A 400-amino-acid polypeptide reads, in one-letter code: Acetate kinase (400 aa).

N10 serves as a coordination point for Mg(2+). Residue K17 participates in ATP binding. R91 is a substrate binding site. Catalysis depends on D148, which acts as the Proton donor/acceptor. ATP-binding positions include 208–212 (HLGNG), 283–285 (DCR), and 331–335 (GIGEN). Residue E385 participates in Mg(2+) binding.

The protein belongs to the acetokinase family. In terms of assembly, homodimer. Requires Mg(2+) as cofactor. It depends on Mn(2+) as a cofactor.

It is found in the cytoplasm. It catalyses the reaction acetate + ATP = acetyl phosphate + ADP. Its pathway is metabolic intermediate biosynthesis; acetyl-CoA biosynthesis; acetyl-CoA from acetate: step 1/2. In terms of biological role, catalyzes the formation of acetyl phosphate from acetate and ATP. Can also catalyze the reverse reaction. This chain is Acetate kinase, found in Shewanella putrefaciens (strain CN-32 / ATCC BAA-453).